A 483-amino-acid polypeptide reads, in one-letter code: Regulatory protein ViaA (483 aa).

It belongs to the ViaA family. In terms of assembly, homodimer. Interacts with RavA.

It localises to the cytoplasm. Component of the RavA-ViaA chaperone complex, which may act on the membrane to optimize the function of some of the respiratory chains. ViaA stimulates the ATPase activity of RavA. The chain is Regulatory protein ViaA from Salmonella arizonae (strain ATCC BAA-731 / CDC346-86 / RSK2980).